Consider the following 669-residue polypeptide: Acetyl-coenzyme A synthetase (669 aa).

Residues 211 to 214 and Thr-329 each bind CoA; that span reads RGGK. Residues 404–406, 428–433, Asp-519, and Arg-534 contribute to the ATP site; these read GEP and DTYWQT. Ser-542 lines the CoA pocket. Arg-545 lines the ATP pocket. Arg-602 contributes to the CoA binding site.

This sequence belongs to the ATP-dependent AMP-binding enzyme family.

It carries out the reaction acetate + ATP + CoA = acetyl-CoA + AMP + diphosphate. It functions in the pathway ketone degradation; acetoin degradation. Its pathway is antibiotic biosynthesis; penicillin biosynthesis. This is Acetyl-coenzyme A synthetase (facA) from Penicillium chrysogenum (Penicillium notatum).